Reading from the N-terminus, the 1587-residue chain is Sister chromatid cohesion protein mis4 (1587 aa).

Positions 140–172 are disordered; sequence PKEKPDASSINTNRSSSDNGFLTPSSSPRSPSC. Residues 147-162 are compositionally biased toward polar residues; sequence SSINTNRSSSDNGFLT. Residues 163–172 show a composition bias toward low complexity; sequence PSSSPRSPSC. Position 183 is a phosphoserine (Ser-183). HEAT repeat units follow at residues 775–812, 814–851, 853–888, 890–927, 1101–1140, and 1183–1220; these read LNLK…IPSI, RTHP…AYRE, IPQI…ATED, NIRV…SPAS, ATLM…ARHS, and DAYV…RETS.

This sequence belongs to the SCC2/Nipped-B family. In terms of assembly, interacts with ssl3.

The protein localises to the nucleus. The protein resides in the chromosome. Plays a structural role in chromatin. Chromatid cohesion molecule required for equal sister chromatid separation in anaphase. May form a stable link between chromatids in S phase that is split rather than removed in anaphase. Also required for spindle-kinetochore interaction in early mitosis and inhibit sister chromatid separation until the cleavage of Rad21 in anaphase. The chain is Sister chromatid cohesion protein mis4 (mis4) from Schizosaccharomyces pombe (strain 972 / ATCC 24843) (Fission yeast).